The primary structure comprises 315 residues: L-lactate dehydrogenase (315 aa).

Residues Val-17, Asp-38, Lys-43, Tyr-69, and 83–84 (GA) each bind NAD(+). Residues Gln-86, Arg-92, and 124 to 127 (NPVD) contribute to the substrate site. NAD(+) contacts are provided by residues 122 to 124 (ATN) and Ser-147. 152–155 (DTAR) is a binding site for substrate. 2 residues coordinate beta-D-fructose 1,6-bisphosphate: Arg-157 and His-172. His-179 serves as the catalytic Proton acceptor. Residue Tyr-224 is modified to Phosphotyrosine. Position 233 (Thr-233) interacts with substrate.

It belongs to the LDH/MDH superfamily. LDH family. In terms of assembly, homotetramer.

It is found in the cytoplasm. It catalyses the reaction (S)-lactate + NAD(+) = pyruvate + NADH + H(+). It participates in fermentation; pyruvate fermentation to lactate; (S)-lactate from pyruvate: step 1/1. With respect to regulation, allosterically activated by fructose 1,6-bisphosphate (FBP). Its function is as follows. Catalyzes the conversion of lactate to pyruvate. This Bacillus pumilus (strain SAFR-032) protein is L-lactate dehydrogenase.